The primary structure comprises 402 residues: LIM/homeobox protein Lhx5 (402 aa).

2 LIM zinc-binding domains span residues 3 to 61 (VHCA…RRFG) and 62 to 125 (TKCA…SSSL). Residues 124–148 (SLKEGSLNSVSSCTDRSLSPDLQDP) show a composition bias toward low complexity. Disordered stretches follow at residues 124-186 (SLKE…PRTT) and 298-402 (HGPP…AAVW). Basic and acidic residues predominate over residues 151 to 167 (DDPKETDNSTSSDKETA). A DNA-binding region (homeobox) is located at residues 180 to 239 (RRGPRTTIKAKQLETLKAAFAATPKPTRHIREQLAQETGLNMRVIQVWFQNRRSKERRMK). 2 stretches are compositionally biased toward low complexity: residues 300-311 (PPSQAQSPADSS) and 322-336 (PLGALEPPLAGPHGA).

Its subcellular location is the nucleus. Functionally, plays an essential role in the regulation of neuronal differentiation and migration during development of the central nervous system. This Mus musculus (Mouse) protein is LIM/homeobox protein Lhx5 (Lhx5).